The following is a 239-amino-acid chain: Zwei Ig domain protein zig-7 (239 aa).

An N-terminal signal peptide occupies residues 1 to 21 (MKLINCISIALLCTLVDFSSA). An N-linked (GlcNAc...) asparagine glycan is attached at asparagine 43. Positions 145 to 211 (PHVIGAERRG…TEDHIGKYRC (67 aa)) constitute an Ig-like C2-type domain. Cysteines 164 and 211 form a disulfide.

Expressed in body wall muscles.

The protein localises to the secreted. Its function is as follows. Probably not involved in maintaining the position of ASI and ASH head neuron cell bodies and ventral nerve cord axons of PVQ, PVP, RMEV, AVK and HSN neurons. This chain is Zwei Ig domain protein zig-7, found in Caenorhabditis elegans.